The sequence spans 880 residues: DNA mismatch repair protein MutS (880 aa).

An ATP-binding site is contributed by 631–638 (GPNMAGKS). Residues 835 to 860 (RAAPPPPAPAAPKTSPVEERLREIQP) are disordered. Positions 850-860 (PVEERLREIQP) are enriched in basic and acidic residues.

Belongs to the DNA mismatch repair MutS family.

Functionally, this protein is involved in the repair of mismatches in DNA. It is possible that it carries out the mismatch recognition step. This protein has a weak ATPase activity. This Cereibacter sphaeroides (strain ATCC 17029 / ATH 2.4.9) (Rhodobacter sphaeroides) protein is DNA mismatch repair protein MutS.